Reading from the N-terminus, the 230-residue chain is V-type proton ATPase subunit E (230 aa).

Belongs to the V-ATPase E subunit family. As to quaternary structure, V-ATPase is a heteromultimeric enzyme composed of a peripheral catalytic V1 complex (components A to H) attached to an integral membrane V0 proton pore complex (components: a, c, c', c'' and d).

Functionally, subunit of the peripheral V1 complex of vacuolar ATPase essential for assembly or catalytic function. V-ATPase is responsible for acidifying a variety of intracellular compartments in eukaryotic cells. The sequence is that of V-type proton ATPase subunit E (VATE) from Citrus limon (Lemon).